Here is a 174-residue protein sequence, read N- to C-terminus: Adipose-secreted signaling protein (174 aa).

This sequence belongs to the ADISSP family.

The protein localises to the secreted. Functionally, may be involved in thermogenesis and glucose homeostasis. This is Adipose-secreted signaling protein from Xenopus tropicalis (Western clawed frog).